Here is a 158-residue protein sequence, read N- to C-terminus: Transcriptional repressor NrdR (158 aa).

Residues 3 to 34 (CPFCNSEETRVIDTRLTDDGHVVRRRRECEHC) fold into a zinc finger. One can recognise an ATP-cone domain in the interval 49 to 139 (IFVVKKGGQR…VYKEFRDLDH (91 aa)).

It belongs to the NrdR family. It depends on Zn(2+) as a cofactor.

In terms of biological role, negatively regulates transcription of bacterial ribonucleotide reductase nrd genes and operons by binding to NrdR-boxes. This Kosmotoga olearia (strain ATCC BAA-1733 / DSM 21960 / TBF 19.5.1) protein is Transcriptional repressor NrdR.